The sequence spans 185 residues: Ribosome-recycling factor (185 aa).

This sequence belongs to the RRF family.

Its subcellular location is the cytoplasm. In terms of biological role, responsible for the release of ribosomes from messenger RNA at the termination of protein biosynthesis. May increase the efficiency of translation by recycling ribosomes from one round of translation to another. The sequence is that of Ribosome-recycling factor from Trichlorobacter lovleyi (strain ATCC BAA-1151 / DSM 17278 / SZ) (Geobacter lovleyi).